Consider the following 503-residue polypeptide: uncharacterized protein (503 aa).

Residues 437 to 465 (LNKDLILENLIETENENDKQEFQKLLRTI) adopt a coiled-coil conformation.

It belongs to the IIV-6 467R family.

This is an uncharacterized protein from Invertebrate iridescent virus 6 (IIV-6).